Reading from the N-terminus, the 71-residue chain is Defensin-like protein 292 (71 aa).

Intrachain disulfides connect Cys44–Cys64, Cys50–Cys69, and Cys56–Cys71.

The protein belongs to the DEFL family.

This is Defensin-like protein 292 from Arabidopsis thaliana (Mouse-ear cress).